The primary structure comprises 434 residues: Glutamate-1-semialdehyde 2,1-aminomutase (434 aa).

Position 267 is an N6-(pyridoxal phosphate)lysine (Lys-267).

This sequence belongs to the class-III pyridoxal-phosphate-dependent aminotransferase family. HemL subfamily. In terms of assembly, homodimer. Requires pyridoxal 5'-phosphate as cofactor.

Its subcellular location is the cytoplasm. The catalysed reaction is (S)-4-amino-5-oxopentanoate = 5-aminolevulinate. Its pathway is porphyrin-containing compound metabolism; protoporphyrin-IX biosynthesis; 5-aminolevulinate from L-glutamyl-tRNA(Glu): step 2/2. The protein operates within porphyrin-containing compound metabolism; chlorophyll biosynthesis. This Roseiflexus castenholzii (strain DSM 13941 / HLO8) protein is Glutamate-1-semialdehyde 2,1-aminomutase.